A 1040-amino-acid chain; its full sequence is Multidrug resistance protein MdtB (1040 aa).

12 consecutive transmembrane segments (helical) span residues 16–36, 342–362, 369–389, 396–416, 440–460, 472–492, 537–557, 863–883, 888–908, 911–931, 968–988, and 998–1018; these read FIMR…AGII, DTQF…YLFL, IIPG…MVFL, LTLM…IVVI, IGFT…PLLF, FAVT…TLTP, WLTL…WVFI, LGST…VLGV, FIHP…ALLA, LAGS…IGIV, ILMT…STGV, and IGMV…TPVI.

This sequence belongs to the resistance-nodulation-cell division (RND) (TC 2.A.6) family. MdtB subfamily. In terms of assembly, part of a tripartite efflux system composed of MdtA, MdtB and MdtC. MdtB forms a heteromultimer with MdtC.

The protein resides in the cell inner membrane. The polypeptide is Multidrug resistance protein MdtB (Klebsiella pneumoniae subsp. pneumoniae (strain ATCC 700721 / MGH 78578)).